A 78-amino-acid chain; its full sequence is Antitoxin FitA (78 aa).

As to quaternary structure, homodimer in the absence of FitB; forms a heterodimer with FitB; 4 FitAB heterodimers form a complex that binds to fitAB promoter DNA. The complex is also seen in solution.

Its function is as follows. Antitoxin component of a type II toxin-antitoxin (TA) system. Plays a role in the speed with which bacteria traverse human epithelial cells; disruption of the locus increases the speed of trafficking about 2-4-fold. Binds to its own promoter, binding affinity of the FitAB complex is 20-30-fold higher than FitA alone. No nuclease activity was observed for the FitAB complex, perhaps because FitA (the antitoxin) prevents metal binding and thus catalysis by FitB. This Neisseria gonorrhoeae (strain ATCC 700825 / FA 1090) protein is Antitoxin FitA (fitA).